A 191-amino-acid chain; its full sequence is Large ribosomal subunit protein bL9c (191 aa).

A chloroplast-targeting transit peptide spans Met-1–Ala-35.

The protein belongs to the bacterial ribosomal protein bL9 family. In terms of assembly, part of the 50S ribosomal subunit.

The protein localises to the plastid. Its subcellular location is the chloroplast. Binds to the 23S rRNA. The protein is Large ribosomal subunit protein bL9c (RPL9) of Triticum aestivum (Wheat).